The sequence spans 241 residues: DNA repair protein RecO (241 aa).

It belongs to the RecO family.

Its function is as follows. Involved in DNA repair and RecF pathway recombination. The protein is DNA repair protein RecO of Yersinia enterocolitica serotype O:8 / biotype 1B (strain NCTC 13174 / 8081).